The primary structure comprises 557 residues: Hdr-like menaquinol oxidoreductase iron-sulfur subunit (557 aa).

2 consecutive 4Fe-4S ferredoxin-type domains span residues 86–115 (RAFKVFMDICVRCGACADKCHYYIGTGDPK) and 155–184 (KEWYYYLLQCSLCRRCSLFCPYGIDTAEVV). Residues Cys95, Cys98, Cys101, Cys105, Cys164, Cys167, Cys170, and Cys174 each coordinate [4Fe-4S] cluster.

The cofactor is [4Fe-4S] cluster.

The protein resides in the membrane. Has menaquinol-oxidizing activity. The HmeC and HmeD subunits may together mediate electron transfer from menaquinol to an unidentified electron acceptor on the cytoplasmic side of the membrane. The chain is Hdr-like menaquinol oxidoreductase iron-sulfur subunit (hmeD) from Archaeoglobus profundus (strain DSM 5631 / JCM 9629 / NBRC 100127 / Av18).